The chain runs to 314 residues: 4-hydroxy-3-methylbut-2-enyl diphosphate reductase (314 aa).

Cysteine 12 is a binding site for [4Fe-4S] cluster. Residues histidine 41 and histidine 74 each coordinate (2E)-4-hydroxy-3-methylbut-2-enyl diphosphate. Residues histidine 41 and histidine 74 each coordinate dimethylallyl diphosphate. Residues histidine 41 and histidine 74 each coordinate isopentenyl diphosphate. Cysteine 96 serves as a coordination point for [4Fe-4S] cluster. Histidine 124 lines the (2E)-4-hydroxy-3-methylbut-2-enyl diphosphate pocket. Histidine 124 contacts dimethylallyl diphosphate. An isopentenyl diphosphate-binding site is contributed by histidine 124. Glutamate 126 acts as the Proton donor in catalysis. Position 167 (threonine 167) interacts with (2E)-4-hydroxy-3-methylbut-2-enyl diphosphate. A [4Fe-4S] cluster-binding site is contributed by cysteine 197. (2E)-4-hydroxy-3-methylbut-2-enyl diphosphate contacts are provided by serine 225, serine 226, asparagine 227, and serine 269. Residues serine 225, serine 226, asparagine 227, and serine 269 each contribute to the dimethylallyl diphosphate site. Residues serine 225, serine 226, asparagine 227, and serine 269 each coordinate isopentenyl diphosphate.

Belongs to the IspH family. It depends on [4Fe-4S] cluster as a cofactor.

It catalyses the reaction isopentenyl diphosphate + 2 oxidized [2Fe-2S]-[ferredoxin] + H2O = (2E)-4-hydroxy-3-methylbut-2-enyl diphosphate + 2 reduced [2Fe-2S]-[ferredoxin] + 2 H(+). The enzyme catalyses dimethylallyl diphosphate + 2 oxidized [2Fe-2S]-[ferredoxin] + H2O = (2E)-4-hydroxy-3-methylbut-2-enyl diphosphate + 2 reduced [2Fe-2S]-[ferredoxin] + 2 H(+). The protein operates within isoprenoid biosynthesis; dimethylallyl diphosphate biosynthesis; dimethylallyl diphosphate from (2E)-4-hydroxy-3-methylbutenyl diphosphate: step 1/1. It functions in the pathway isoprenoid biosynthesis; isopentenyl diphosphate biosynthesis via DXP pathway; isopentenyl diphosphate from 1-deoxy-D-xylulose 5-phosphate: step 6/6. Its function is as follows. Catalyzes the conversion of 1-hydroxy-2-methyl-2-(E)-butenyl 4-diphosphate (HMBPP) into a mixture of isopentenyl diphosphate (IPP) and dimethylallyl diphosphate (DMAPP). Acts in the terminal step of the DOXP/MEP pathway for isoprenoid precursor biosynthesis. The chain is 4-hydroxy-3-methylbut-2-enyl diphosphate reductase from Actinobacillus succinogenes (strain ATCC 55618 / DSM 22257 / CCUG 43843 / 130Z).